A 365-amino-acid chain; its full sequence is Solute carrier family 35 member G1 (365 aa).

The interval 1–33 (MRPQDSTGVAELQEPGLPLTDDAPPGATEEPAA) is disordered. Positions 23–33 (APPGATEEPAA) are enriched in low complexity. Transmembrane regions (helical) follow at residues 69–89 (GLGLFYTLLSAFLFSVGSLFV), 97–117 (AVEISAFRCVFQMLVVIPCLI), 131–151 (IFLILRGVLGSTAMMLIYYAY), 156–176 (LADATVITFSSPVFTSIFAWI), 187–207 (ALFTVFTITGVILIVRPPFLF), 222–242 (LKGTFAAIGSAVFAASTLVIL), 252–272 (FLSIWYYVVLGLVESVIILSV), 286–306 (LFLIFIGLFGLGGQIFITKAL), 311–333 (AGPVAIMKTMDVVFAFIFQIIFF), and 338–357 (TWWTVGGALCVVASNVGAAI). 2 consecutive EamA domains span residues 80–202 (FLFS…LIVR) and 233–357 (VFAA…GAAI).

Belongs to the TMEM20 family. Interacts with STIM1; stimulated by depletion of intracellular calcium. Interacts with ORAI1. Interacts with the plasma membrane calcium-transporting ATPases ATP2B1 and ATP2B4. Interacts with ATP1A1, ATP2A2, KPNB1 and XPO1. In terms of tissue distribution, ubiquitously expressed.

The protein localises to the cell membrane. It localises to the endoplasmic reticulum membrane. Functionally, may play a role in intracellular calcium sensing and homeostasis. May act as a negative regulator of plasma membrane calcium-transporting ATPases preventing calcium efflux from the cell. The chain is Solute carrier family 35 member G1 (SLC35G1) from Homo sapiens (Human).